The sequence spans 180 residues: Centromere protein M (180 aa).

As to quaternary structure, component of the CENPA-NAC complex, at least composed of CENPA, CENPC, CENPH, CENPM, CENPN, CENPT and CENPU. The CENPA-NAC complex interacts with the CENPA-CAD complex, composed of CENPI, CENPK, CENPL, CENPO, CENPP, CENPQ, CENPR and CENPS.

The protein localises to the nucleus. Its subcellular location is the cytoplasm. The protein resides in the chromosome. It localises to the centromere. It is found in the kinetochore. Component of the CENPA-NAC (nucleosome-associated) complex, a complex that plays a central role in assembly of kinetochore proteins, mitotic progression and chromosome segregation. The CENPA-NAC complex recruits the CENPA-CAD (nucleosome distal) complex and may be involved in incorporation of newly synthesized CENPA into centromeres. This Bos taurus (Bovine) protein is Centromere protein M (CENPM).